The primary structure comprises 417 residues: D-galactonate dehydratase family member Dd703_0947 (417 aa).

Residue H127 participates in substrate binding. Y158 functions as the Proton donor/acceptor in the catalytic mechanism. A Mg(2+)-binding site is contributed by D223. The Proton donor/acceptor role is filled by H225. The Mg(2+) site is built by E249 and E275. Substrate is bound by residues E275, R296, H325, D329, and E352.

The protein belongs to the mandelate racemase/muconate lactonizing enzyme family. GalD subfamily. Requires Mg(2+) as cofactor.

It carries out the reaction D-mannonate = 2-dehydro-3-deoxy-D-gluconate + H2O. The enzyme catalyses D-gluconate = 2-dehydro-3-deoxy-D-gluconate + H2O. Has low dehydratase activity with D-mannonate and D-gluconate, suggesting that these are not physiological substrates and that it has no significant role in the in vivo degradation of these compounds. Has no detectable activity with a panel of 70 other acid sugars (in vitro). In Musicola paradisiaca (strain Ech703) (Dickeya paradisiaca), this protein is D-galactonate dehydratase family member Dd703_0947.